The following is a 363-amino-acid chain: 3-isopropylmalate dehydrogenase (363 aa).

78–91 (GPKWEHLPPAEQPE) is an NAD(+) binding site. Substrate-binding residues include Arg99, Arg109, Arg138, and Asp227. Residues Asp227, Asp251, and Asp255 each coordinate Mg(2+). Position 285-297 (285-297 (GSAPDIAGKDIAN)) interacts with NAD(+).

This sequence belongs to the isocitrate and isopropylmalate dehydrogenases family. LeuB type 1 subfamily. Homodimer. Requires Mg(2+) as cofactor. Mn(2+) is required as a cofactor.

It is found in the cytoplasm. It catalyses the reaction (2R,3S)-3-isopropylmalate + NAD(+) = 4-methyl-2-oxopentanoate + CO2 + NADH. Its pathway is amino-acid biosynthesis; L-leucine biosynthesis; L-leucine from 3-methyl-2-oxobutanoate: step 3/4. Catalyzes the oxidation of 3-carboxy-2-hydroxy-4-methylpentanoate (3-isopropylmalate) to 3-carboxy-4-methyl-2-oxopentanoate. The product decarboxylates to 4-methyl-2 oxopentanoate. The sequence is that of 3-isopropylmalate dehydrogenase from Pectobacterium atrosepticum (strain SCRI 1043 / ATCC BAA-672) (Erwinia carotovora subsp. atroseptica).